The sequence spans 249 residues: Large ribosomal subunit protein uL22m (249 aa).

The transit peptide at 1 to 22 (MKYINQFMKISKGFLVPSSTIG) directs the protein to the mitochondrion. Residues 70 to 98 (ANQKDDSNRQQKEERVKERPRSRISFKKQ) form a disordered region. A compositionally biased stretch (basic and acidic residues) spans 72–98 (QKDDSNRQQKEERVKERPRSRISFKKQ).

The protein belongs to the universal ribosomal protein uL22 family. In terms of assembly, component of the mitochondrial large ribosomal subunit (mt-LSU). Mature yeast 74S mitochondrial ribosomes consist of a small (37S) and a large (54S) subunit. The 37S small subunit contains a 15S ribosomal RNA (15S mt-rRNA) and at least 32 different proteins. The 54S large subunit contains a 21S rRNA (21S mt-rRNA) and at least 45 different proteins. uL22m forms the wall of the exit tunnel.

Its subcellular location is the mitochondrion. In terms of biological role, component of the mitochondrial ribosome (mitoribosome), a dedicated translation machinery responsible for the synthesis of mitochondrial genome-encoded proteins, including at least some of the essential transmembrane subunits of the mitochondrial respiratory chain. The mitoribosomes are attached to the mitochondrial inner membrane and translation products are cotranslationally integrated into the membrane. The sequence is that of Large ribosomal subunit protein uL22m (mrpl22) from Schizosaccharomyces pombe (strain 972 / ATCC 24843) (Fission yeast).